The sequence spans 114 residues: Large ribosomal subunit protein bL20c (114 aa).

Belongs to the bacterial ribosomal protein bL20 family.

It is found in the plastid. It localises to the chloroplast. Its function is as follows. Binds directly to 23S ribosomal RNA and is necessary for the in vitro assembly process of the 50S ribosomal subunit. It is not involved in the protein synthesizing functions of that subunit. This Guillardia theta (Cryptophyte) protein is Large ribosomal subunit protein bL20c (rpl20).